The chain runs to 600 residues: Transcription factor rlmA (600 aa).

The 61-residue stretch at 1-61 folds into the MADS-box domain; the sequence is MGRRKIEIKA…KKLYEFSSCD (61 aa). Disordered stretches follow at residues 71–518 and 544–600; these read YYGP…NIET and GFGR…KSKT. The span at 75 to 89 shows a compositional bias: basic and acidic residues; sequence PHEHKGPEDFNGKRD. The span at 151–160 shows a compositional bias: polar residues; sequence PQPQGASRPS. Positions 222–242 are enriched in pro residues; the sequence is QPLPPHAIPPHPMPQPVPPHH. A compositionally biased stretch (low complexity) spans 243-260; the sequence is QAPQHLPQHPHPLAQQTP. The segment covering 328-339 has biased composition (polar residues); the sequence is HQRSLSSKSRSI. The segment covering 364 to 384 has biased composition (basic and acidic residues); it reads PRTESADVKAEAKQNDSKEIK. Over residues 386-397 the composition is skewed to pro residues; the sequence is PAQPVAPPPPPR. A compositionally biased stretch (low complexity) spans 440 to 452; that stretch reads RGSATADSSSSTG. Over residues 453–468 the composition is skewed to polar residues; sequence NQTVTPAKANPDTNHS. Positions 490-501 are enriched in pro residues; the sequence is PPNPFARPPPPG. The span at 503 to 515 shows a compositional bias: low complexity; it reads ASQNSNAYNSNNN.

Belongs to the MEF2 family. As to quaternary structure, interacts with hsp90. In terms of processing, phosphorylation during asexual development.

It is found in the nucleus. Transcription factor; part of cell wall integrity (CWI) signaling pathway composed of pkcA, the bck1-mkk2-mpka MAPK cascade and the downstream rlmA transcription regulator. The CWI signaling pathway regulates cell wall integrity and pyomelanin formation. CWI also controls oxidative stress response, gliotoxin production, iron adaptation and asexual development. Finally, CWI is constitutively required for A.fumigatus to cope with the temperature increase found in the mammalian lung environment, during infection. Positively regulates the phosphorylation of mpkA. Involved in tolerance to oxidative damage and transcriptional regulation of genes related to oxidative stress adaptation. Directly regulates the expression of regulators of conidiation, including flbB, flbC, brlA, abaA, and rasB, as well as genes involved in cell wall synthesis and remodeling. Specifically associates with the target fumiquinazoline (fmq) cluster genes promoters at conserved motifs (5'-TAWWWWTA-3') during conidiation to supplement mature conidia with fumiquinazoline C. Also controls the DHN-melanin production via binding the promoter of pksP. The protein is Transcription factor rlmA of Aspergillus fumigatus (strain ATCC MYA-4609 / CBS 101355 / FGSC A1100 / Af293) (Neosartorya fumigata).